We begin with the raw amino-acid sequence, 562 residues long: Oxygen-dependent choline dehydrogenase (562 aa).

4–33 (DYIIIGAGSAGNVLATRLTEDPNTSVLLLE) serves as a coordination point for FAD. H473 serves as the catalytic Proton acceptor.

Belongs to the GMC oxidoreductase family. FAD is required as a cofactor.

The protein localises to the cell membrane. The catalysed reaction is choline + A = betaine aldehyde + AH2. It catalyses the reaction betaine aldehyde + NAD(+) + H2O = glycine betaine + NADH + 2 H(+). Its pathway is amine and polyamine biosynthesis; betaine biosynthesis via choline pathway; betaine aldehyde from choline (cytochrome c reductase route): step 1/1. Involved in the biosynthesis of the osmoprotectant glycine betaine. Catalyzes the oxidation of choline to betaine aldehyde and betaine aldehyde to glycine betaine at the same rate. The sequence is that of Oxygen-dependent choline dehydrogenase from Escherichia coli O157:H7.